An 81-amino-acid polypeptide reads, in one-letter code: RNA-binding protein Hfq (81 aa).

A Sm domain is found at 11–71 (DIFLNNARKN…ISTITPTKPI (61 aa)).

This sequence belongs to the Hfq family. In terms of assembly, homohexamer.

Its function is as follows. RNA chaperone that binds small regulatory RNA (sRNAs) and mRNAs to facilitate mRNA translational regulation in response to envelope stress, environmental stress and changes in metabolite concentrations. Also binds with high specificity to tRNAs. This chain is RNA-binding protein Hfq, found in Clostridium beijerinckii (strain ATCC 51743 / NCIMB 8052) (Clostridium acetobutylicum).